Consider the following 274-residue polypeptide: Penicillin-insensitive murein endopeptidase (274 aa).

A signal peptide spans 1–19 (MNKTAIALLALLASSASLA). Disulfide bonds link Cys-44/Cys-265, Cys-187/Cys-235, and Cys-216/Cys-223. 6 residues coordinate Zn(2+): His-110, His-113, Asp-120, Asp-147, His-150, and His-211. The segment at 228–265 (LPPPGDGCGAELQSWFAPPKPGTTKPEKKTPPPLPPSC) is disordered.

It belongs to the peptidase M74 family. As to quaternary structure, dimer. Zn(2+) serves as cofactor.

It is found in the periplasm. Its function is as follows. Murein endopeptidase that cleaves the D-alanyl-meso-2,6-diamino-pimelyl amide bond that connects peptidoglycan strands. Likely plays a role in the removal of murein from the sacculus. The protein is Penicillin-insensitive murein endopeptidase of Shigella boydii serotype 18 (strain CDC 3083-94 / BS512).